The chain runs to 266 residues: MPKGKKAKGKKVAPAPSVAKKHEAKKVVNPLFEKRPKNFGIGQDIQPKRDLTRFVKWPRYIRLQRQRSILYKRLKVPPAINQFTQALDRQTATQLFKLAHKYRPETKQEKKKRLLARAEQKAAGKGDAPTKRPPVLRAGVNTITSLVENKKAQLVVIAHDVDPIELVIFLPALCRKMGVPYCIVKGKARLGRLVHRKTCTSVAFTQTNPEDKGALAKLVEAIKTNYNDRYEEIRRHWGGGILGPKSTARINKLEKAKAKELATKLG.

Basic residues predominate over residues 1–11 (MPKGKKAKGKK). 2 disordered regions span residues 1–28 (MPKG…KKVV) and 105–134 (ETKQ…KRPP). Basic and acidic residues predominate over residues 116 to 130 (ARAEQKAAGKGDAPT).

Belongs to the eukaryotic ribosomal protein eL8 family. As to quaternary structure, component of the large ribosomal subunit.

It is found in the cytoplasm. In terms of biological role, component of the large ribosomal subunit. The ribosome is a large ribonucleoprotein complex responsible for the synthesis of proteins in the cell. This is Large ribosomal subunit protein eL8 (rpl7a) from Takifugu rubripes (Japanese pufferfish).